A 201-amino-acid chain; its full sequence is Ras-related protein Rab-35 (201 aa).

Residues Gly18, Val19, Gly20, Lys21, Ser22, Ser23, Ser34, Gly35, Tyr37, Thr39, and Thr40 each coordinate GTP. Ser22 serves as a coordination point for Mg(2+). Residues 30-42 carry the Switch 1 motif; it reads DNTFSGSYITTIG. Positions 40 and 63 each coordinate Mg(2+). The Switch 2 motif lies at 64–80; the sequence is TAGQERFRTITSTYYRG. Gly66 lines the GTP pocket. Phosphothreonine; by LRRK2 is present on Thr72. The residue at position 75 (Ser75) is an O-(2-cholinephosphoryl)serine. Tyr77 carries the post-translational modification O-AMP-tyrosine. Positions 120, 121, 123, 151, and 152 each coordinate GTP. Residues Cys200 and Cys201 are each lipidated (S-geranylgeranyl cysteine).

It belongs to the small GTPase superfamily. Rab family. Interacts with DENND1A and DENND1B; in a nucleotide-dependent manner. Interacts with DENND1C; weak interaction which is nucleotide-independent. Interacts (GTP-bound form) with ACAP2, RUSC2, OCRL MICAL1 and MICALL1; the interaction is direct and probably recruits these effectors to membranes. Interacts with EHD1; the interaction is indirect through MICALL1 and probably recruits EHD1 to membranes. Interacts with GDI1, GDI2, CHM and CHML; phosphorylation at Thr-72 by LRRK2 disrupts these interactions. Mg(2+) serves as cofactor. Post-translationally, phosphorylation at Thr-72 by LRRK2 prevents the association of regulatory proteins including CHM, CHML and GDP dissociation inhibitors GDI1 and GDI2. In terms of processing, AMPylation at Tyr-77 by L.pneumophila DrrA occurs in the switch 2 region and leads to moderate inactivation of the GTPase activity. It appears to prolong the lifetime of the GTP state of RAB1B by restricting access of GTPase effectors to switch 2 and blocking effector-stimulated GTP hydrolysis, thereby rendering RAB35 constitutively active. Phosphocholinated by L.pneumophila AnkX. Both GDP-bound and GTP-bound forms can be phosphocholinated. Phosphocholination inhibits the GEF activity of DENND1A.

Its subcellular location is the cell membrane. The protein localises to the membrane. It is found in the clathrin-coated pit. The protein resides in the cytoplasmic vesicle. It localises to the clathrin-coated vesicle. Its subcellular location is the endosome. The protein localises to the melanosome. It catalyses the reaction GTP + H2O = GDP + phosphate + H(+). Regulated by guanine nucleotide exchange factors (GEFs) including DENND1A, DENND1B and DENND1C which promote the exchange of bound GDP for free GTP. Regulated by GTPase activating proteins (GAPs) including TBC1D10 and TBC1D13 which increase GTP hydrolysis activity. Inhibited by GDP dissociation inhibitors (GDIs) which prevent Rab-GDP dissociation. Functionally, the small GTPases Rab are key regulators of intracellular membrane trafficking, from the formation of transport vesicles to their fusion with membranes. Rabs cycle between an inactive GDP-bound form and an active GTP-bound form that is able to recruit to membranes different sets of downstream effectors directly responsible for vesicle formation, movement, tethering and fusion. RAB35 is involved in the process of endocytosis and is an essential rate-limiting regulator of the fast recycling pathway back to the plasma membrane. During cytokinesis, required for the postfurrowing terminal steps, namely for intercellular bridge stability and abscission, possibly by controlling phosphatidylinositol 4,5-bis phosphate (PIP2) and SEPT2 localization at the intercellular bridge. May indirectly regulate neurite outgrowth. Together with TBC1D13 may be involved in regulation of insulin-induced glucose transporter SLC2A4/GLUT4 translocation to the plasma membrane in adipocytes. In Homo sapiens (Human), this protein is Ras-related protein Rab-35.